A 355-amino-acid polypeptide reads, in one-letter code: Sorbitol dehydrogenase (355 aa).

Alanine 2 is modified (N-acetylalanine). Cysteine 43 serves as a coordination point for Zn(2+). Tyrosine 49 provides a ligand contact to substrate. The Zn(2+) site is built by histidine 68 and glutamate 69. Glutamate 154 provides a ligand contact to substrate. Residues isoleucine 182, aspartate 202, arginine 207, 271 to 273 (VGL), and 295 to 297 (IFR) each bind NAD(+). Residues arginine 297 and tyrosine 298 each contribute to the substrate site.

Belongs to the zinc-containing alcohol dehydrogenase family. Homotetramer. Requires Zn(2+) as cofactor. In terms of tissue distribution, expressed in liver.

The protein localises to the mitochondrion membrane. It is found in the cell projection. The protein resides in the cilium. Its subcellular location is the flagellum. It catalyses the reaction keto-D-fructose + NADH + H(+) = D-sorbitol + NAD(+). Functionally, polyol dehydrogenase that catalyzes the reversible NAD(+)-dependent oxidation of various sugar alcohols. Is active with D-sorbitol (D-glucitol) as substrate, leading to the C2-oxidized product D-fructose. Is a key enzyme in the polyol pathway that interconverts glucose and fructose via sorbitol, which constitutes an important alternate route for glucose metabolism. In Gallus gallus (Chicken), this protein is Sorbitol dehydrogenase (SORD).